Consider the following 376-residue polypeptide: Carbapenem antibiotics biosynthesis protein CarD (376 aa).

This sequence belongs to the proline oxidase family.

Its pathway is antibiotic biosynthesis; carbapenem biosynthesis. The polypeptide is Carbapenem antibiotics biosynthesis protein CarD (carD) (Pectobacterium carotovorum subsp. carotovorum (Erwinia carotovora subsp. carotovora)).